The chain runs to 147 residues: Transthyretin (147 aa).

The N-terminal stretch at 1–20 (MASLRLFLLCLAGLIFASEA) is a signal peptide. Cys-30 bears the Sulfocysteine mark. Position 35 (Lys-35) interacts with L-thyroxine. Glu-62 carries the post-translational modification 4-carboxyglutamate. The residue at position 72 (Ser-72) is a Phosphoserine. Residue Glu-74 participates in L-thyroxine binding. Asn-118 carries an N-linked (GlcNAc...) asparagine glycan. Ser-137 serves as a coordination point for L-thyroxine.

This sequence belongs to the transthyretin family. As to quaternary structure, homotetramer. Dimer of dimers. In the homotetramer, subunits assemble around a central channel that can accommodate two ligand molecules. Interacts with RBP4. In terms of processing, sulfonation of the reactive cysteine Cys-30 enhances the stability of the native conformation of TTR, avoiding misassembly of the protein leading to amyloid formation. Detected in serum and cerebrospinal fluid (at protein level). Highly expressed in the choroid plexus. Detected at lower levels in the liver.

It localises to the secreted. Functionally, thyroid hormone-binding protein. Probably transports thyroxine from the bloodstream to the brain. This Rattus norvegicus (Rat) protein is Transthyretin (Ttr).